The sequence spans 331 residues: Heme A synthase (331 aa).

A run of 8 helical transmembrane segments spans residues 6–26, 87–107, 124–144, 154–174, 193–213, 251–271, 279–299, and 301–321; these read VAIW…IGGF, YVHR…FIYF, ALLF…SGLV, LALH…QFFD, IWII…VAGL, VQFI…ILTI, LYVM…TLLL, and IPMA…GSGL. Heme is bound at residue His255. His309 contacts heme.

It belongs to the COX15/CtaA family. Type 2 subfamily. As to quaternary structure, interacts with CtaB. It depends on heme b as a cofactor.

It localises to the cell membrane. It carries out the reaction Fe(II)-heme o + 2 A + H2O = Fe(II)-heme a + 2 AH2. The protein operates within porphyrin-containing compound metabolism; heme A biosynthesis; heme A from heme O: step 1/1. Functionally, catalyzes the conversion of heme O to heme A by two successive hydroxylations of the methyl group at C8. The first hydroxylation forms heme I, the second hydroxylation results in an unstable dihydroxymethyl group, which spontaneously dehydrates, resulting in the formyl group of heme A. The protein is Heme A synthase of Wolbachia pipientis subsp. Culex pipiens (strain wPip).